Here is a 99-residue protein sequence, read N- to C-terminus: uncharacterized protein (99 aa).

This is an uncharacterized protein from Caenorhabditis elegans.